Here is a 319-residue protein sequence, read N- to C-terminus: Annexin A4 (319 aa).

At A2 the chain carries N-acetylalanine. Position 7 is a phosphothreonine; by PKC (T7). Position 12 is a phosphoserine (S12). Annexin repeat units lie at residues 14–85 (FNAA…GMMT), 86–157 (PTVL…SLSA), 169–241 (ALVR…AIVK), and 245–316 (NKSA…ILCG). K213, K293, and K300 each carry N6-acetyllysine.

This sequence belongs to the annexin family. Monomer.

It localises to the zymogen granule membrane. Functionally, calcium/phospholipid-binding protein which promotes membrane fusion and is involved in exocytosis. This is Annexin A4 (ANXA4) from Sus scrofa (Pig).